Consider the following 266-residue polypeptide: Agamous-like MADS-box protein AGL97 (266 aa).

The 61-residue stretch at Gly3–Phe63 folds into the MADS-box domain. Residues Trp88–Leu130 adopt a coiled-coil conformation.

Interacts with AGL27 and AGL62.

The protein resides in the nucleus. Functionally, putative transcription factor. This chain is Agamous-like MADS-box protein AGL97 (AGL97), found in Arabidopsis thaliana (Mouse-ear cress).